Reading from the N-terminus, the 516-residue chain is Anaerobic nitric oxide reductase transcription regulator NorR (516 aa).

Asp-57 carries the 4-aspartylphosphate modification. Residues 187 to 416 (IIGLSAPMLQ…LEHAIHRAVV (230 aa)) form the Sigma-54 factor interaction domain. ATP-binding positions include 215–222 (GETGTGKE) and 278–287 (ADNGTLFLDE). Positions 482-501 (WAATARALELDVANLHRLAK) form a DNA-binding region, H-T-H motif.

It functions in the pathway nitrogen metabolism; nitric oxide reduction. Functionally, required for the expression of anaerobic nitric oxide (NO) reductase, acts as a transcriptional activator for at least the norVW operon. Activation also requires sigma-54. This chain is Anaerobic nitric oxide reductase transcription regulator NorR, found in Klebsiella pneumoniae (strain 342).